The chain runs to 350 residues: Fe-S cluster assembly protein dre2 (350 aa).

Positions threonine 23–valine 156 are N-terminal SAM-like domain. The tract at residues proline 157–methionine 242 is linker. Residues asparagine 165–proline 209 form a disordered region. Residues lysine 190–valine 208 show a composition bias toward basic and acidic residues. Residues cysteine 252, cysteine 263, cysteine 266, and cysteine 268 each contribute to the [2Fe-2S] cluster site. Residues cysteine 252 to cysteine 268 are fe-S binding site A. [4Fe-4S] cluster is bound by residues cysteine 313, cysteine 316, cysteine 324, and cysteine 327. Short sequence motifs (cx2C motif) lie at residues cysteine 313–cysteine 316 and cysteine 324–cysteine 327. A fe-S binding site B region spans residues cysteine 313 to cysteine 327.

It belongs to the anamorsin family. In terms of assembly, monomer. Interacts with TAH18. Interacts with MIA40. Requires [2Fe-2S] cluster as cofactor. The cofactor is [4Fe-4S] cluster.

The protein resides in the cytoplasm. It is found in the mitochondrion intermembrane space. Component of the cytosolic iron-sulfur (Fe-S) protein assembly (CIA) machinery required for the maturation of extramitochondrial Fe-S proteins. Part of an electron transfer chain functioning in an early step of cytosolic Fe-S biogenesis, facilitating the de novo assembly of a [4Fe-4S] cluster on the scaffold complex CFD1-NBP35. Electrons are transferred to DRE2 from NADPH via the FAD- and FMN-containing protein TAH18. TAH18-DRE2 are also required for the assembly of the diferric tyrosyl radical cofactor of ribonucleotide reductase (RNR), probably by providing electrons for reduction during radical cofactor maturation in the catalytic small subunit RNR2. The sequence is that of Fe-S cluster assembly protein dre2 from Sclerotinia sclerotiorum (strain ATCC 18683 / 1980 / Ss-1) (White mold).